Here is a 362-residue protein sequence, read N- to C-terminus: Biotin synthase (362 aa).

The 228-residue stretch at 46–273 folds into the Radical SAM core domain; sequence NEVQVSTLLS…ASHVRLSAGR (228 aa). C61, C65, and C68 together coordinate [4Fe-4S] cluster. C105, C136, C196, and R268 together coordinate [2Fe-2S] cluster.

The protein belongs to the radical SAM superfamily. Biotin synthase family. In terms of assembly, homodimer. It depends on [4Fe-4S] cluster as a cofactor. Requires [2Fe-2S] cluster as cofactor.

It carries out the reaction (4R,5S)-dethiobiotin + (sulfur carrier)-SH + 2 reduced [2Fe-2S]-[ferredoxin] + 2 S-adenosyl-L-methionine = (sulfur carrier)-H + biotin + 2 5'-deoxyadenosine + 2 L-methionine + 2 oxidized [2Fe-2S]-[ferredoxin]. It functions in the pathway cofactor biosynthesis; biotin biosynthesis; biotin from 7,8-diaminononanoate: step 2/2. Catalyzes the conversion of dethiobiotin (DTB) to biotin by the insertion of a sulfur atom into dethiobiotin via a radical-based mechanism. The chain is Biotin synthase from Aeromonas salmonicida (strain A449).